The sequence spans 76 residues: ATP synthase subunit c (76 aa).

2 consecutive transmembrane segments (helical) span residues 7-27 (VATA…IGII) and 50-70 (FIGI…AFLI).

This sequence belongs to the ATPase C chain family. In terms of assembly, F-type ATPases have 2 components, F(1) - the catalytic core - and F(0) - the membrane proton channel. F(1) has five subunits: alpha(3), beta(3), gamma(1), delta(1), epsilon(1). F(0) has four main subunits: a(1), b(1), b'(1) and c(10-14). The alpha and beta chains form an alternating ring which encloses part of the gamma chain. F(1) is attached to F(0) by a central stalk formed by the gamma and epsilon chains, while a peripheral stalk is formed by the delta, b and b' chains.

It localises to the cell membrane. Its function is as follows. F(1)F(0) ATP synthase produces ATP from ADP in the presence of a proton or sodium gradient. F-type ATPases consist of two structural domains, F(1) containing the extramembraneous catalytic core and F(0) containing the membrane proton channel, linked together by a central stalk and a peripheral stalk. During catalysis, ATP synthesis in the catalytic domain of F(1) is coupled via a rotary mechanism of the central stalk subunits to proton translocation. Functionally, key component of the F(0) channel; it plays a direct role in translocation across the membrane. A homomeric c-ring of between 10-14 subunits forms the central stalk rotor element with the F(1) delta and epsilon subunits. This chain is ATP synthase subunit c, found in Chloroflexus aurantiacus (strain ATCC 29366 / DSM 635 / J-10-fl).